The following is a 336-amino-acid chain: Ribosomal RNA large subunit methyltransferase F (336 aa).

Belongs to the methyltransferase superfamily. METTL16/RlmF family.

The protein localises to the cytoplasm. The enzyme catalyses adenosine(1618) in 23S rRNA + S-adenosyl-L-methionine = N(6)-methyladenosine(1618) in 23S rRNA + S-adenosyl-L-homocysteine + H(+). Specifically methylates the adenine in position 1618 of 23S rRNA. The polypeptide is Ribosomal RNA large subunit methyltransferase F (Yersinia pseudotuberculosis serotype I (strain IP32953)).